We begin with the raw amino-acid sequence, 223 residues long: Thiamine-phosphate synthase (223 aa).

Residues 45–49 (QYREK) and Asn77 each bind 4-amino-2-methyl-5-(diphosphooxymethyl)pyrimidine. Residues Asp78 and Asp97 each coordinate Mg(2+). Thr116 is a binding site for 4-amino-2-methyl-5-(diphosphooxymethyl)pyrimidine. 142 to 144 (SYT) provides a ligand contact to 2-[(2R,5Z)-2-carboxy-4-methylthiazol-5(2H)-ylidene]ethyl phosphate. Residue Lys145 participates in 4-amino-2-methyl-5-(diphosphooxymethyl)pyrimidine binding. Residues Gly173 and 193–194 (VT) each bind 2-[(2R,5Z)-2-carboxy-4-methylthiazol-5(2H)-ylidene]ethyl phosphate.

The protein belongs to the thiamine-phosphate synthase family. Requires Mg(2+) as cofactor.

The catalysed reaction is 2-[(2R,5Z)-2-carboxy-4-methylthiazol-5(2H)-ylidene]ethyl phosphate + 4-amino-2-methyl-5-(diphosphooxymethyl)pyrimidine + 2 H(+) = thiamine phosphate + CO2 + diphosphate. The enzyme catalyses 2-(2-carboxy-4-methylthiazol-5-yl)ethyl phosphate + 4-amino-2-methyl-5-(diphosphooxymethyl)pyrimidine + 2 H(+) = thiamine phosphate + CO2 + diphosphate. It catalyses the reaction 4-methyl-5-(2-phosphooxyethyl)-thiazole + 4-amino-2-methyl-5-(diphosphooxymethyl)pyrimidine + H(+) = thiamine phosphate + diphosphate. It participates in cofactor biosynthesis; thiamine diphosphate biosynthesis; thiamine phosphate from 4-amino-2-methyl-5-diphosphomethylpyrimidine and 4-methyl-5-(2-phosphoethyl)-thiazole: step 1/1. Its function is as follows. Condenses 4-methyl-5-(beta-hydroxyethyl)thiazole monophosphate (THZ-P) and 2-methyl-4-amino-5-hydroxymethyl pyrimidine pyrophosphate (HMP-PP) to form thiamine monophosphate (TMP). This chain is Thiamine-phosphate synthase, found in Dictyoglomus thermophilum (strain ATCC 35947 / DSM 3960 / H-6-12).